Reading from the N-terminus, the 77-residue chain is Large ribosomal subunit protein bL28 (77 aa).

Positions 1–26 are disordered; the sequence is MARVCKVTGKRPMSGNNVSHANNKTK.

This sequence belongs to the bacterial ribosomal protein bL28 family.

This chain is Large ribosomal subunit protein bL28, found in Neisseria gonorrhoeae (strain ATCC 700825 / FA 1090).